The chain runs to 312 residues: Ribosomal RNA small subunit methyltransferase H (312 aa).

S-adenosyl-L-methionine is bound by residues Gly-33–Tyr-35, Asp-51, Phe-78, Asp-97, and Gln-104.

It belongs to the methyltransferase superfamily. RsmH family.

The protein resides in the cytoplasm. The enzyme catalyses cytidine(1402) in 16S rRNA + S-adenosyl-L-methionine = N(4)-methylcytidine(1402) in 16S rRNA + S-adenosyl-L-homocysteine + H(+). In terms of biological role, specifically methylates the N4 position of cytidine in position 1402 (C1402) of 16S rRNA. In Orientia tsutsugamushi (strain Boryong) (Rickettsia tsutsugamushi), this protein is Ribosomal RNA small subunit methyltransferase H.